Consider the following 112-residue polypeptide: Histone H2B (112 aa).

Positions 1–24 are disordered; it reads MATPKSSSANRKKGGKKSHRKPKR. Basic residues predominate over residues 10–24; that stretch reads NRKKGGKKSHRKPKR.

It belongs to the histone H2B family. As to quaternary structure, the nucleosome is a histone octamer containing two molecules each of H2A, H2B, H3 and H4 assembled in one H3-H4 heterotetramer and two H2A-H2B heterodimers. The octamer wraps approximately 147 bp of DNA.

It localises to the nucleus. The protein localises to the chromosome. In terms of biological role, core component of nucleosome. Nucleosomes wrap and compact DNA into chromatin, limiting DNA accessibility to the cellular machineries which require DNA as a template. Histones thereby play a central role in transcription regulation, DNA repair, DNA replication and chromosomal stability. DNA accessibility is regulated via a complex set of post-translational modifications of histones, also called histone code, and nucleosome remodeling. The polypeptide is Histone H2B (Trypanosoma cruzi).